Reading from the N-terminus, the 197-residue chain is MSELDSVAVLCGGRGRRMGSDKGLLLMDDRPFIEIITAKLLGHFSDVLVVLRDTDQAGTYRGILDDRVRILTDELPGAGPLGGIYTALGNISGDAALFLPCDAPLVTDEFLVNMKECFRRLGDSCDAIVPWGDDGPEPLHAVYSARVRGTVEALLSKNKRRVGTLIESINSCRIAAIRLDPTLQSFRNFNRPEDLRI.

GTP contacts are provided by residues 10 to 12, lysine 22, aspartate 73, and aspartate 102; that span reads LCG. A Mg(2+)-binding site is contributed by aspartate 102.

This sequence belongs to the MobA family. Mg(2+) serves as cofactor.

The protein localises to the cytoplasm. It catalyses the reaction Mo-molybdopterin + GTP + H(+) = Mo-molybdopterin guanine dinucleotide + diphosphate. Transfers a GMP moiety from GTP to Mo-molybdopterin (Mo-MPT) cofactor (Moco or molybdenum cofactor) to form Mo-molybdopterin guanine dinucleotide (Mo-MGD) cofactor. This is Probable molybdenum cofactor guanylyltransferase from Methanothermobacter thermautotrophicus (strain ATCC 29096 / DSM 1053 / JCM 10044 / NBRC 100330 / Delta H) (Methanobacterium thermoautotrophicum).